A 271-amino-acid polypeptide reads, in one-letter code: Phosphate import ATP-binding protein PstB 2 (271 aa).

The segment at 1-20 (MLTKKPEINTILQTTPDPHS) is disordered. The 242-residue stretch at 25-266 (MATEDLHVYY…PQEKQTEDYI (242 aa)) folds into the ABC transporter domain. 57 to 64 (GPSGCGKS) lines the ATP pocket.

This sequence belongs to the ABC transporter superfamily. Phosphate importer (TC 3.A.1.7) family. The complex is composed of two ATP-binding proteins (PstB), two transmembrane proteins (PstC and PstA) and a solute-binding protein (PstS).

The protein resides in the cell membrane. It catalyses the reaction phosphate(out) + ATP + H2O = ADP + 2 phosphate(in) + H(+). In terms of biological role, part of the ABC transporter complex PstSACB involved in phosphate import. Responsible for energy coupling to the transport system. The protein is Phosphate import ATP-binding protein PstB 2 of Listeria innocua serovar 6a (strain ATCC BAA-680 / CLIP 11262).